Here is a 154-residue protein sequence, read N- to C-terminus: Anaerobic ribonucleoside-triphosphate reductase-activating protein (154 aa).

[4Fe-4S] cluster contacts are provided by Cys26, Cys30, and Cys33. Residues 32 to 34 and Gly74 contribute to the S-adenosyl-L-methionine site; that span reads GCY.

Belongs to the organic radical-activating enzymes family. In terms of assembly, forms a tetramer composed of two NrdD and two NrdG subunits. Requires [4Fe-4S] cluster as cofactor.

It is found in the cytoplasm. The enzyme catalyses glycyl-[protein] + reduced [flavodoxin] + S-adenosyl-L-methionine = glycin-2-yl radical-[protein] + semiquinone [flavodoxin] + 5'-deoxyadenosine + L-methionine + H(+). Functionally, activation of anaerobic ribonucleoside-triphosphate reductase under anaerobic conditions by generation of an organic free radical, using S-adenosylmethionine and reduced flavodoxin as cosubstrates to produce 5'-deoxy-adenosine. The polypeptide is Anaerobic ribonucleoside-triphosphate reductase-activating protein (nrdG) (Escherichia coli O157:H7).